The primary structure comprises 312 residues: HPr kinase/phosphorylase (312 aa).

Catalysis depends on residues His139 and Lys160. 154–161 (GSSGVGKS) is a binding site for ATP. Residue Ser161 coordinates Mg(2+). Asp178 acts as the Proton acceptor; for phosphorylation activity. Proton donor; for dephosphorylation activity in catalysis. The important for the catalytic mechanism of both phosphorylation and dephosphorylation stretch occupies residues 202–211 (LEIRGLGIIN). Position 203 (Glu203) interacts with Mg(2+). Arg244 is an active-site residue. Residues 265-270 (PVRPGR) are important for the catalytic mechanism of dephosphorylation.

Belongs to the HPrK/P family. In terms of assembly, homohexamer. The cofactor is Mg(2+).

It carries out the reaction [HPr protein]-L-serine + ATP = [HPr protein]-O-phospho-L-serine + ADP + H(+). The enzyme catalyses [HPr protein]-O-phospho-L-serine + phosphate + H(+) = [HPr protein]-L-serine + diphosphate. In terms of biological role, catalyzes the ATP- as well as the pyrophosphate-dependent phosphorylation of a specific serine residue in HPr, a phosphocarrier protein of the phosphoenolpyruvate-dependent sugar phosphotransferase system (PTS). HprK/P also catalyzes the pyrophosphate-producing, inorganic phosphate-dependent dephosphorylation (phosphorolysis) of seryl-phosphorylated HPr (P-Ser-HPr). The two antagonistic activities of HprK/P are regulated by several intracellular metabolites, which change their concentration in response to the absence or presence of rapidly metabolisable carbon sources (glucose, fructose, etc.) in the growth medium. Therefore, by controlling the phosphorylation state of HPr, HPrK/P is a sensor enzyme that plays a major role in the regulation of carbon metabolism and sugar transport: it mediates carbon catabolite repression (CCR), and regulates PTS-catalyzed carbohydrate uptake and inducer exclusion. This chain is HPr kinase/phosphorylase, found in Listeria monocytogenes serotype 4b (strain CLIP80459).